The primary structure comprises 367 residues: Histidinol-phosphate aminotransferase (367 aa).

At K226 the chain carries N6-(pyridoxal phosphate)lysine.

The protein belongs to the class-II pyridoxal-phosphate-dependent aminotransferase family. Histidinol-phosphate aminotransferase subfamily. Homodimer. It depends on pyridoxal 5'-phosphate as a cofactor.

The catalysed reaction is L-histidinol phosphate + 2-oxoglutarate = 3-(imidazol-4-yl)-2-oxopropyl phosphate + L-glutamate. It functions in the pathway amino-acid biosynthesis; L-histidine biosynthesis; L-histidine from 5-phospho-alpha-D-ribose 1-diphosphate: step 7/9. This chain is Histidinol-phosphate aminotransferase, found in Aliarcobacter butzleri (strain RM4018) (Arcobacter butzleri).